We begin with the raw amino-acid sequence, 114 residues long: T cell receptor alpha variable 10 (114 aa).

The first 21 residues, M1–G21, serve as a signal peptide directing secretion. The Ig-like domain occupies N23–S114. N-linked (GlcNAc...) asparagine glycans are attached at residues N39 and N45. The cysteines at positions 44 and 111 are disulfide-linked.

As to quaternary structure, alpha-beta TR is a heterodimer composed of an alpha and beta chain; disulfide-linked. The alpha-beta TR is associated with the transmembrane signaling CD3 coreceptor proteins to form the TR-CD3 (TcR or TCR). The assembly of alpha-beta TR heterodimers with CD3 occurs in the endoplasmic reticulum where a single alpha-beta TR heterodimer associates with one CD3D-CD3E heterodimer, one CD3G-CD3E heterodimer and one CD247 homodimer forming a stable octameric structure. CD3D-CD3E and CD3G-CD3E heterodimers preferentially associate with TR alpha and TR beta chains, respectively. The association of the CD247 homodimer is the last step of TcR assembly in the endoplasmic reticulum and is required for transport to the cell surface.

The protein localises to the cell membrane. Its function is as follows. V region of the variable domain of T cell receptor (TR) alpha chain that participates in the antigen recognition. Alpha-beta T cell receptors are antigen specific receptors which are essential to the immune response and are present on the cell surface of T lymphocytes. Recognize peptide-major histocompatibility (MH) (pMH) complexes that are displayed by antigen presenting cells (APC), a prerequisite for efficient T cell adaptive immunity against pathogens. Binding of alpha-beta TR to pMH complex initiates TR-CD3 clustering on the cell surface and intracellular activation of LCK that phosphorylates the ITAM motifs of CD3G, CD3D, CD3E and CD247 enabling the recruitment of ZAP70. In turn ZAP70 phosphorylates LAT, which recruits numerous signaling molecules to form the LAT signalosome. The LAT signalosome propagates signal branching to three major signaling pathways, the calcium, the mitogen-activated protein kinase (MAPK) kinase and the nuclear factor NF-kappa-B (NF-kB) pathways, leading to the mobilization of transcription factors that are critical for gene expression and essential for T cell growth and differentiation. The T cell repertoire is generated in the thymus, by V-(D)-J rearrangement. This repertoire is then shaped by intrathymic selection events to generate a peripheral T cell pool of self-MH restricted, non-autoaggressive T cells. Post-thymic interaction of alpha-beta TR with the pMH complexes shapes TR structural and functional avidity. This Homo sapiens (Human) protein is T cell receptor alpha variable 10.